We begin with the raw amino-acid sequence, 481 residues long: UDP-glycosyltransferase 88F3 (481 aa).

UDP-alpha-D-glucose contacts are provided by residues Ser288, 357–358 (WA), 375–383 (HCGWNSVLE), and 397–400 (YAEQ).

Belongs to the UDP-glycosyltransferase family.

Functionally, glycosyltransferase that may possess chalcone and dihydrochalcone 2'-O-glucosyltransferase activity. This chain is UDP-glycosyltransferase 88F3, found in Pyrus communis (Pear).